Consider the following 578-residue polypeptide: Trehalase (578 aa).

Residues 1–19 form the signal peptide; sequence MPGSTWELHLLLLLGLGLG. An N-linked (GlcNAc...) asparagine glycan is attached at asparagine 78. Substrate contacts are provided by residues arginine 168, 175–176, asparagine 212, and 221–223; these read WD and RSQ. N-linked (GlcNAc...) asparagine glycosylation occurs at asparagine 261. Substrate-binding positions include 286 to 288 and glycine 319; that span reads RPE. Aspartate 321 (proton donor/acceptor) is an active-site residue. Asparagine 369 carries N-linked (GlcNAc...) asparagine glycosylation. The active-site Proton donor/acceptor is glutamate 514. Glutamate 528 contributes to the substrate binding site. The GPI-anchor amidated serine moiety is linked to residue serine 555. Residues 556–578 constitute a propeptide, removed in mature form; it reads GTQLALLEPHCLAAALLLSFLTR.

Belongs to the glycosyl hydrolase 37 family. In terms of assembly, homodimer; disulfide-linked. In terms of tissue distribution, expressed in small intestine, kidney, and to a lesser extent in liver.

It is found in the cell membrane. The enzyme catalyses alpha,alpha-trehalose + H2O = alpha-D-glucose + beta-D-glucose. Functionally, intestinal trehalase is probably involved in the hydrolysis of ingested trehalose. This is Trehalase (TREH) from Oryctolagus cuniculus (Rabbit).